Reading from the N-terminus, the 329-residue chain is Ribosomal RNA small subunit methyltransferase C (329 aa).

Belongs to the methyltransferase superfamily. RsmC family. In terms of assembly, monomer.

The protein resides in the cytoplasm. The enzyme catalyses guanosine(1207) in 16S rRNA + S-adenosyl-L-methionine = N(2)-methylguanosine(1207) in 16S rRNA + S-adenosyl-L-homocysteine + H(+). Functionally, specifically methylates the guanine in position 1207 of 16S rRNA in the 30S particle. This chain is Ribosomal RNA small subunit methyltransferase C, found in Actinobacillus pleuropneumoniae serotype 3 (strain JL03).